The chain runs to 207 residues: Octanoyltransferase (207 aa).

The 177-residue stretch at Ala-27–Ala-203 folds into the BPL/LPL catalytic domain. Residues Arg-66 to His-73, Ser-133 to Gly-135, and Gly-146 to Ala-148 contribute to the substrate site. Catalysis depends on Cys-164, which acts as the Acyl-thioester intermediate.

The protein belongs to the LipB family.

The protein localises to the cytoplasm. It catalyses the reaction octanoyl-[ACP] + L-lysyl-[protein] = N(6)-octanoyl-L-lysyl-[protein] + holo-[ACP] + H(+). The protein operates within protein modification; protein lipoylation via endogenous pathway; protein N(6)-(lipoyl)lysine from octanoyl-[acyl-carrier-protein]: step 1/2. In terms of biological role, catalyzes the transfer of endogenously produced octanoic acid from octanoyl-acyl-carrier-protein onto the lipoyl domains of lipoate-dependent enzymes. Lipoyl-ACP can also act as a substrate although octanoyl-ACP is likely to be the physiological substrate. This Neisseria meningitidis serogroup C / serotype 2a (strain ATCC 700532 / DSM 15464 / FAM18) protein is Octanoyltransferase.